Reading from the N-terminus, the 295-residue chain is Pyridoxal 5'-phosphate synthase subunit PdxS (295 aa).

Aspartate 25 contacts D-ribose 5-phosphate. The Schiff-base intermediate with D-ribose 5-phosphate role is filled by lysine 82. Glycine 154 is a D-ribose 5-phosphate binding site. Arginine 166 lines the D-glyceraldehyde 3-phosphate pocket. Residues glycine 215 and 236–237 (GS) each bind D-ribose 5-phosphate.

Belongs to the PdxS/SNZ family. In terms of assembly, in the presence of PdxT, forms a dodecamer of heterodimers.

It catalyses the reaction aldehydo-D-ribose 5-phosphate + D-glyceraldehyde 3-phosphate + L-glutamine = pyridoxal 5'-phosphate + L-glutamate + phosphate + 3 H2O + H(+). The protein operates within cofactor biosynthesis; pyridoxal 5'-phosphate biosynthesis. In terms of biological role, catalyzes the formation of pyridoxal 5'-phosphate from ribose 5-phosphate (RBP), glyceraldehyde 3-phosphate (G3P) and ammonia. The ammonia is provided by the PdxT subunit. Can also use ribulose 5-phosphate and dihydroxyacetone phosphate as substrates, resulting from enzyme-catalyzed isomerization of RBP and G3P, respectively. This is Pyridoxal 5'-phosphate synthase subunit PdxS from Bacillus cytotoxicus (strain DSM 22905 / CIP 110041 / 391-98 / NVH 391-98).